A 219-amino-acid chain; its full sequence is PKHD-type hydroxylase Plav_0037 (219 aa).

The 95-residue stretch at Asn78–Ser172 folds into the Fe2OG dioxygenase domain. Positions 96, 98, and 153 each coordinate Fe cation. Arg163 serves as a coordination point for 2-oxoglutarate.

It depends on Fe(2+) as a cofactor. L-ascorbate is required as a cofactor.

The polypeptide is PKHD-type hydroxylase Plav_0037 (Parvibaculum lavamentivorans (strain DS-1 / DSM 13023 / NCIMB 13966)).